A 146-amino-acid chain; its full sequence is Hut operon positive regulatory protein (146 aa).

The protein belongs to the HutP family. Homohexamer.

Antiterminator that binds to cis-acting regulatory sequences on the mRNA in the presence of histidine, thereby suppressing transcription termination and activating the hut operon for histidine utilization. This Bacillus cereus (strain ZK / E33L) protein is Hut operon positive regulatory protein.